Consider the following 352-residue polypeptide: Lipopolysaccharide core biosynthesis mannosyltransferase LpcC (352 aa).

Belongs to the glycosyltransferase group 1 family. Glycosyltransferase 4 subfamily.

It participates in bacterial outer membrane biogenesis; LPS core biosynthesis. Acts at transfer of mannose group to a 3-deoxy-D-mono octulonic acid (KDO) via an alpha-1,5 linkage. The protein is Lipopolysaccharide core biosynthesis mannosyltransferase LpcC (lpcC) of Rhizobium leguminosarum bv. viciae.